The sequence spans 427 residues: Putative transporter YdfJ (427 aa).

Topologically, residues 1–7 (MDFQLYS) are cytoplasmic. 2 helical membrane-spanning segments follow: residues 8 to 28 (LGAA…AMAL) and 29 to 49 (ILAM…AFIF). Residues 50–74 (GKMGDRIGRKKVLFITITMMGICTT) are Cytoplasmic-facing. A helical membrane pass occupies residues 75-95 (LIGVLPTYAQIGVFAPILLVT). Residues 96 to 97 (LR) are Periplasmic-facing. The helical transmembrane segment at 98–118 (IIQGLGAGAEISGAGTMLAEY) threads the bilayer. Topologically, residues 119 to 132 (APKGKRGIISSFVA) are cytoplasmic. Residues 133-153 (MGTNCGTLSATAIWAFMFFIL) form a helical membrane-spanning segment. Residues 154 to 157 (SKEE) are Periplasmic-facing. The chain crosses the membrane as a helical span at residues 158-178 (LLAWGWRIPFLASVVVMVFAI). The Cytoplasmic segment spans residues 179–225 (WLRMNLKESPVFEKVNDSNQPTAKPAPAGSMFQSKSFWLATGLRFGQ). Residues 226 to 246 (AGNSGLIQTFLAGYLVQTLLF) form a helical membrane-spanning segment. Residues 247–251 (NKAIP) are Periplasmic-facing. A helical transmembrane segment spans residues 252–272 (TDALMISSILGFMTIPFLGWL). Topologically, residues 273-279 (SDKIGRR) are cytoplasmic. The chain crosses the membrane as a helical span at residues 280 to 300 (IPYIIMNTSAIVLAWPMLSII). The Periplasmic portion of the chain corresponds to 301 to 307 (VDKSYAP). The chain crosses the membrane as a helical span at residues 308-328 (STIMVALIVIHNCAVLGLFAL). Topologically, residues 329–351 (ENITMAEMFGCKNRFTRMAISKE) are cytoplasmic. A helical transmembrane segment spans residues 352 to 372 (IGGLIASGFGPILAGIFCTMT). Residue glutamate 373 is a topological domain, periplasmic. Residues 374–394 (SWYPIAIMIMAYSVIGLISAL) form a helical membrane-spanning segment. Topologically, residues 395 to 427 (KMPEVKDRDLSALEDAAEDQPRVVRAAQPSRSL) are cytoplasmic.

The protein belongs to the major facilitator superfamily. Metabolite:H+ Symporter (MHS) family (TC 2.A.1.6) family.

Its subcellular location is the cell inner membrane. In terms of biological role, when overexpressed in human HEK-293 cells forms an inward rectifying potassium channel. The protein is Putative transporter YdfJ (ydfJ) of Escherichia coli (strain K12).